The sequence spans 240 residues: Guanine nucleotide exchange factor sopE2 (240 aa).

Positions 78–240 (LTSKTVKDFM…IANKYLQNAS (163 aa)) are GEF catalytic domain.

The protein belongs to the GEF (guanine exchange factor) SopE family.

It is found in the secreted. In terms of biological role, activator for CDC42 by directly engaging this Rho GTPase and acting as potent guanine nucleotide exchange factor (GEF). This activation results in actin cytoskeleton rearrangements and stimulates membrane ruffling, promoting bacterial entry into non-phagocytic cells. Also activates NF-kB, p38 and ERK kinases, which are known to be involved in the induction of IL-8 expression. Chaperone InvB is required for secretion, translocation and stabilization of intracellular levels of sopE2. The polypeptide is Guanine nucleotide exchange factor sopE2 (sopE2) (Salmonella typhimurium (strain LT2 / SGSC1412 / ATCC 700720)).